The sequence spans 98 residues: uncharacterized protein (98 aa).

It belongs to the CFAP97 family.

This is an uncharacterized protein from Homo sapiens (Human).